Consider the following 424-residue polypeptide: Enolase (424 aa).

Residue Gln-165 participates in (2R)-2-phosphoglycerate binding. Catalysis depends on Glu-207, which acts as the Proton donor. Positions 244, 283, and 310 each coordinate Mg(2+). Lys-335, Arg-364, Ser-365, and Lys-386 together coordinate (2R)-2-phosphoglycerate. Lys-335 serves as the catalytic Proton acceptor.

Belongs to the enolase family. The cofactor is Mg(2+).

The protein localises to the cytoplasm. The protein resides in the secreted. Its subcellular location is the cell surface. It carries out the reaction (2R)-2-phosphoglycerate = phosphoenolpyruvate + H2O. It participates in carbohydrate degradation; glycolysis; pyruvate from D-glyceraldehyde 3-phosphate: step 4/5. In terms of biological role, catalyzes the reversible conversion of 2-phosphoglycerate (2-PG) into phosphoenolpyruvate (PEP). It is essential for the degradation of carbohydrates via glycolysis. In Chlamydia muridarum (strain MoPn / Nigg), this protein is Enolase.